Here is a 700-residue protein sequence, read N- to C-terminus: Mei4-dependent protein 6 (700 aa).

Kelch repeat units lie at residues 276–322 (CIYL…MVID), 327–381 (KLYL…FDHG), 390–439 (IVYV…KIER), 452–499 (KLYI…FCQR), 508–558 (RIFT…SRFG), and 569–619 (IIYL…RFHE).

This Schizosaccharomyces pombe (strain 972 / ATCC 24843) (Fission yeast) protein is Mei4-dependent protein 6 (mde6).